Reading from the N-terminus, the 161-residue chain is uncharacterized protein (161 aa).

The segment at 126 to 161 (TPSNCGESSTSSGQSSGDESNCSLRTHGVYTRGEQH) is disordered. Residues 128-148 (SNCGESSTSSGQSSGDESNCS) are compositionally biased toward low complexity.

Belongs to the herpesviridae US1 family.

This is an uncharacterized protein from Human cytomegalovirus (strain AD169) (HHV-5).